Here is a 647-residue protein sequence, read N- to C-terminus: MKKEEYLEKVALANLWMRAYYEKDEPLASDEEYDALIRELRVFEEQNKDEISKDSPTQKIAPTIQSEFKKIAHLKRMWSMEDVFDESELRAWAKRAKCEKNFFIEPKFDGASLNLLYENGKLVSGATRGDGEVGEDITLNVFEIENIPKNIAYKERIEIRGEVVILKDDFEKINEKRALLNQSLFANPRNAASGSLRQLDTSITKERNLKFYPWGVGENTLNFTKHSEVMQFIRELGFLKDDFVRLCANLDEVLKAYDELLVLREKKPMMMDGMVVRVDDLALCEELGYTVKFPKFMAAFKFPALEKTTRLIGVNLQVGRSGAITPVAVLEPVNLDGVVVKSATLHNFDEIARLDVKINDFVSVIRSGDVIPKITKVFKERREGLEMEISRPKLCPTCQSELLDEGTLIKCQNIDCEDRLVNSIIHFVSKKCLNIDGLGENIVELLYKHKKITTLESIFHLKFNDFEGLEGFKEKKINNLLNAIEQARECELFRFITALGIEHIGEVAAKKLSLSFGKEWYKQSFEAYANLEGFGEQMALSLCEFTRVNHTRIDEFYKLLNLKIEKLEIKSDGVIFGKTFVITGTLSRPRDEFKALIEKLGGKVSGSVSKKTDYVLFGEEAGSKLSKAKELEVKCIDESAFNELVKE.

NAD(+)-binding positions include Asp30–Asp34, Ser79–Met80, and Glu105. Residue Lys107 is the N6-AMP-lysine intermediate of the active site. 3 residues coordinate NAD(+): Arg128, Glu162, and Lys301. Positions 395, 398, 411, and 416 each coordinate Zn(2+). One can recognise a BRCT domain in the interval Lys570–Glu647.

This sequence belongs to the NAD-dependent DNA ligase family. LigA subfamily. The cofactor is Mg(2+). Mn(2+) serves as cofactor.

The catalysed reaction is NAD(+) + (deoxyribonucleotide)n-3'-hydroxyl + 5'-phospho-(deoxyribonucleotide)m = (deoxyribonucleotide)n+m + AMP + beta-nicotinamide D-nucleotide.. In terms of biological role, DNA ligase that catalyzes the formation of phosphodiester linkages between 5'-phosphoryl and 3'-hydroxyl groups in double-stranded DNA using NAD as a coenzyme and as the energy source for the reaction. It is essential for DNA replication and repair of damaged DNA. The polypeptide is DNA ligase (Campylobacter jejuni (strain RM1221)).